Reading from the N-terminus, the 451-residue chain is MILSVNSAWLERFQADRPREKDHRPPFRRDRARILHSAAFRCLQAKTQIHAVGENDFYRTRLTHSLEVAQIGSSLASQLRFTEAFTSLTEQLNCSSKELESVLKPLLPSNDLIETLCFAHDIGHPPFGHGGETALNAMMRHSGGFEGNAQTFRIVTKLEPYTEKAGMNLTRRTVLGLVKYPAILDEASPQYSLLDLPHPTDLGHLRQIDWRPSKGLYRDDLTMINWLLKPLSDTDRRLFTSFRKVRSNFQEFLKTVYKSLDCSIMELADDIAYGVHDLEDAVVVGLISQSQWQAAYDELKNCSSDWMRKNVDTLTQKLFSDYHYERKNAIGALVNYFITHVRWKMTADFTDPLLRYNAELPDDVICVLNIFKDFVFKYVIRDVETQRIEFRGQRILTDMFQIFESDPERLLPRNTVKRWQNAEAEGRKRIICDYIAGMSDAYALRVHRQLS.

In terms of domain architecture, HD spans 61–274 (RLTHSLEVAQ…MELADDIAYG (214 aa)).

The protein belongs to the dGTPase family. Type 2 subfamily.

The chain is Deoxyguanosinetriphosphate triphosphohydrolase-like protein from Actinobacillus succinogenes (strain ATCC 55618 / DSM 22257 / CCUG 43843 / 130Z).